The sequence spans 737 residues: SANT and BTB domain regulator of class switch recombination (737 aa).

The region spanning 21–59 (DMILYPLIGIPQTINWETVARLVPGLTPKECVKRFDELK) is the SANT domain. The BTB domain maps to 147 to 255 (MVIHVCDEAK…QCIQYCHKNM (109 aa)). Acidic residues predominate over residues 555 to 576 (SEEEEYTTGSEVTEDEVGDEEE). The disordered stretch occupies residues 555 to 618 (SEEEEYTTGS…TLEKSTSRDV (64 aa)). Residues 580–595 (KQRKKEKPKKFTKPPK) are compositionally biased toward basic residues. The segment covering 604-615 (QKKEKTLEKSTS) has biased composition (basic and acidic residues).

This sequence belongs to the KIAA1841 family. In terms of assembly, homodimer. Interacts (via the BTB domain) with HDAC1 and NCOR2.

Negatively regulates class switch recombination or isotype switching in splenic B-cells. In Rattus norvegicus (Rat), this protein is SANT and BTB domain regulator of class switch recombination.